The sequence spans 91 residues: uncharacterized protein (91 aa).

This is an uncharacterized protein from Homo sapiens (Human).